Here is a 177-residue protein sequence, read N- to C-terminus: 2-C-methyl-D-erythritol 2,4-cyclodiphosphate synthase (177 aa).

Residues aspartate 8 and histidine 10 each coordinate a divalent metal cation. 4-CDP-2-C-methyl-D-erythritol 2-phosphate-binding positions include 8–10 and 34–35; these read DVH and HS. Histidine 42 provides a ligand contact to a divalent metal cation. 4-CDP-2-C-methyl-D-erythritol 2-phosphate-binding positions include 56–58, 61–65, 132–135, phenylalanine 139, and arginine 142; these read DIG, FPDTD, and TTEE.

The protein belongs to the IspF family. As to quaternary structure, homotrimer. A divalent metal cation is required as a cofactor.

It catalyses the reaction 4-CDP-2-C-methyl-D-erythritol 2-phosphate = 2-C-methyl-D-erythritol 2,4-cyclic diphosphate + CMP. The protein operates within isoprenoid biosynthesis; isopentenyl diphosphate biosynthesis via DXP pathway; isopentenyl diphosphate from 1-deoxy-D-xylulose 5-phosphate: step 4/6. Its function is as follows. Involved in the biosynthesis of isopentenyl diphosphate (IPP) and dimethylallyl diphosphate (DMAPP), two major building blocks of isoprenoid compounds. Catalyzes the conversion of 4-diphosphocytidyl-2-C-methyl-D-erythritol 2-phosphate (CDP-ME2P) to 2-C-methyl-D-erythritol 2,4-cyclodiphosphate (ME-CPP) with a corresponding release of cytidine 5-monophosphate (CMP). The protein is 2-C-methyl-D-erythritol 2,4-cyclodiphosphate synthase of Agathobacter rectalis (strain ATCC 33656 / DSM 3377 / JCM 17463 / KCTC 5835 / VPI 0990) (Eubacterium rectale).